Consider the following 317-residue polypeptide: Ribose-phosphate pyrophosphokinase (317 aa).

ATP-binding positions include 43–45 (DGE) and 102–103 (RQ). ADP contacts are provided by Lys-106 and Arg-110. Residue His-136 coordinates Mg(2+). Residues Gln-141 and 149–150 (DH) each bind ADP. Asp-175 provides a ligand contact to Mg(2+). Lys-198 is a catalytic residue. D-ribose 5-phosphate-binding positions include Arg-200, Asp-224, and 228–232 (DTAGT). 311–313 (SVS) is an ADP binding site.

Belongs to the ribose-phosphate pyrophosphokinase family. Class I subfamily. Homohexamer; trimer of dimers. The cofactor is Mg(2+).

It is found in the cytoplasm. The enzyme catalyses D-ribose 5-phosphate + ATP = 5-phospho-alpha-D-ribose 1-diphosphate + AMP + H(+). It participates in metabolic intermediate biosynthesis; 5-phospho-alpha-D-ribose 1-diphosphate biosynthesis; 5-phospho-alpha-D-ribose 1-diphosphate from D-ribose 5-phosphate (route I): step 1/1. Its activity is regulated as follows. Activated by inorganic phosphate, and to a lesser extent by sulfate ions. In addition to form a complex with ATP, Mg(2+) also acts as a cofactor. Strongly inhibited by ADP through competitive binding at the activation site and at a specific allosteric site. Less strongly inhibited by alpha,beta-methylene ATP (mADP), AMP, GDP, GMP and UTP. Functionally, involved in the biosynthesis of the central metabolite phospho-alpha-D-ribosyl-1-pyrophosphate (PRPP) via the transfer of pyrophosphoryl group from ATP to 1-hydroxyl of ribose-5-phosphate (Rib-5-P). The sequence is that of Ribose-phosphate pyrophosphokinase from Bacillus subtilis (strain 168).